The primary structure comprises 296 residues: Ribosomal protein L11 methyltransferase (296 aa).

4 residues coordinate S-adenosyl-L-methionine: Thr139, Gly163, Asp185, and Asn232.

The protein belongs to the methyltransferase superfamily. PrmA family.

Its subcellular location is the cytoplasm. It carries out the reaction L-lysyl-[protein] + 3 S-adenosyl-L-methionine = N(6),N(6),N(6)-trimethyl-L-lysyl-[protein] + 3 S-adenosyl-L-homocysteine + 3 H(+). In terms of biological role, methylates ribosomal protein L11. The chain is Ribosomal protein L11 methyltransferase from Picosynechococcus sp. (strain ATCC 27264 / PCC 7002 / PR-6) (Agmenellum quadruplicatum).